Reading from the N-terminus, the 261-residue chain is Undecaprenyl-diphosphatase (261 aa).

Helical transmembrane passes span 38-58, 75-95, 106-126, 136-156, 181-201, 217-237, and 241-261; these read RSDF…TFVF, RDYV…GLAV, IQPI…AESV, VTWS…VFPG, FSFL…CFEL, VAFV…LGYI, and SFAP…TWLT.

Belongs to the UppP family.

It localises to the cell inner membrane. It carries out the reaction di-trans,octa-cis-undecaprenyl diphosphate + H2O = di-trans,octa-cis-undecaprenyl phosphate + phosphate + H(+). In terms of biological role, catalyzes the dephosphorylation of undecaprenyl diphosphate (UPP). Confers resistance to bacitracin. This Xylella fastidiosa (strain 9a5c) protein is Undecaprenyl-diphosphatase.